We begin with the raw amino-acid sequence, 691 residues long: Elongation factor G (691 aa).

One can recognise a tr-type G domain in the interval 8-282 (DRVRNIGIAA…AVVDYLPAPI (275 aa)). Residues 17 to 24 (AHIDAGKT), 81 to 85 (DTPGH), and 135 to 138 (NKMD) each bind GTP.

This sequence belongs to the TRAFAC class translation factor GTPase superfamily. Classic translation factor GTPase family. EF-G/EF-2 subfamily.

It is found in the cytoplasm. Its function is as follows. Catalyzes the GTP-dependent ribosomal translocation step during translation elongation. During this step, the ribosome changes from the pre-translocational (PRE) to the post-translocational (POST) state as the newly formed A-site-bound peptidyl-tRNA and P-site-bound deacylated tRNA move to the P and E sites, respectively. Catalyzes the coordinated movement of the two tRNA molecules, the mRNA and conformational changes in the ribosome. The polypeptide is Elongation factor G (Synechococcus sp. (strain RCC307)).